The sequence spans 445 residues: MAAQVASGVGNLNLNSEDGAAAKNISAQGSPENEARESDGEYDDDQGAPELGNTTAAKKKKKKTKKKKKGTSKVQTEPPRVILSSLFPNNQYPEGEIIEYQNENAYRTTNEEKRHLDRMNNDFLAEYRYAAEVHRQVRQYSQKAIKPGQTLTEIAEGIEESVRALTGYPGLEEGDNLRGGIAFPTGVNLNHCAAHYTPNAGNKMVLQYEDVMKVDFGVHINGRIVDSAFTIAFDPVYDNLLAAVKDATNTGIKQAGIDVRMSDIGAAIQEAMESYEVEIKGTSYPVKAIRNLNGHTIGRYEIHGGKNGKSVPIVKGGDQTKMEEGEVYAIETFGSTGRGYVRDDMETSHYAKIPDAPNVPLRLSSAKNLLNVITKNFGTLPFCRRYLDRLGQDKYLLGLNNLVANGIVDAYPPLCDVKGSYTAQFEHTILLRPNVKEVISRGDDY.

Residues Met-1–Arg-80 form a disordered region. A compositionally biased stretch (basic residues) spans Ala-57–Thr-71. His-195 is a substrate binding site. Residues Asp-215, Asp-226, and His-295 each contribute to the a divalent metal cation site. Substrate is bound at residue His-303. Residues Glu-331 and Glu-426 each coordinate a divalent metal cation.

The protein belongs to the peptidase M24A family. Methionine aminopeptidase eukaryotic type 2 subfamily. The cofactor is Co(2+). Requires Zn(2+) as cofactor. It depends on Mn(2+) as a cofactor. Fe(2+) is required as a cofactor.

It is found in the cytoplasm. It catalyses the reaction Release of N-terminal amino acids, preferentially methionine, from peptides and arylamides.. Cotranslationally removes the N-terminal methionine from nascent proteins. The N-terminal methionine is often cleaved when the second residue in the primary sequence is small and uncharged (Met-Ala-, Cys, Gly, Pro, Ser, Thr, or Val). In Paracoccidioides brasiliensis (strain Pb18), this protein is Methionine aminopeptidase 2.